Here is a 257-residue protein sequence, read N- to C-terminus: AA9 family lytic polysaccharide monooxygenase U (257 aa).

Residues 1–19 form the signal peptide; it reads MKLYLAAFLGAVATPGAFA. Residue His-20 coordinates Cu(2+). N-linked (GlcNAc...) asparagine glycans are attached at residues Asn-29 and Asn-71. An intrachain disulfide couples Cys-74 to Cys-194. His-113 is a binding site for Cu(2+). A glycan (N-linked (GlcNAc...) asparagine) is linked at Asn-161. Gln-189 lines the O2 pocket. Tyr-191 is a Cu(2+) binding site.

It belongs to the polysaccharide monooxygenase AA9 family. Cu(2+) is required as a cofactor.

Its subcellular location is the secreted. The enzyme catalyses [(1-&gt;4)-beta-D-glucosyl]n+m + reduced acceptor + O2 = 4-dehydro-beta-D-glucosyl-[(1-&gt;4)-beta-D-glucosyl]n-1 + [(1-&gt;4)-beta-D-glucosyl]m + acceptor + H2O.. Lytic polysaccharide monooxygenase (LPMO) that depolymerizes crystalline and amorphous polysaccharides via the oxidation of scissile alpha- or beta-(1-4)-glycosidic bonds, yielding C1 and C4 oxidation products. Catalysis by LPMOs requires the reduction of the active-site copper from Cu(II) to Cu(I) by a reducing agent and H(2)O(2) or O(2) as a cosubstrate. Shows no activity on wheat arabinoxylan, konjac glucomannan, acetylated spruce galactoglucomannan, or cellopentaose. This chain is AA9 family lytic polysaccharide monooxygenase U, found in Thermothielavioides terrestris (strain ATCC 38088 / NRRL 8126) (Thielavia terrestris).